We begin with the raw amino-acid sequence, 438 residues long: UDP-N-acetylmuramoylalanine--D-glutamate ligase (438 aa).

ATP is bound at residue 112 to 118 (GSNGKST).

The protein belongs to the MurCDEF family.

The protein resides in the cytoplasm. It catalyses the reaction UDP-N-acetyl-alpha-D-muramoyl-L-alanine + D-glutamate + ATP = UDP-N-acetyl-alpha-D-muramoyl-L-alanyl-D-glutamate + ADP + phosphate + H(+). It participates in cell wall biogenesis; peptidoglycan biosynthesis. Cell wall formation. Catalyzes the addition of glutamate to the nucleotide precursor UDP-N-acetylmuramoyl-L-alanine (UMA). The sequence is that of UDP-N-acetylmuramoylalanine--D-glutamate ligase from Sodalis glossinidius (strain morsitans).